A 960-amino-acid chain; its full sequence is Gamma-aminobutyric acid type B receptor subunit 1 (960 aa).

The first 19 residues, methionine 1–alanine 19, serve as a signal peptide directing secretion. Topologically, residues glutamine 20 to leucine 590 are extracellular. Residues asparagine 23 and asparagine 83 are each glycosylated (N-linked (GlcNAc...) asparagine). Sushi domains lie at cysteine 29 to cysteine 95 and arginine 97 to valine 158. Disulfide bonds link cysteine 99-cysteine 144, cysteine 130-cysteine 156, and cysteine 219-cysteine 245. The 4-aminobutanoate site is built by serine 246, serine 269, histidine 286, and tyrosine 366. A disulfide bridge links cysteine 375 with cysteine 409. N-linked (GlcNAc...) asparagine glycosylation is found at asparagine 408 and asparagine 439. Glutamate 465 is a 4-aminobutanoate binding site. Asparagine 481, asparagine 501, and asparagine 513 each carry an N-linked (GlcNAc...) asparagine glycan. Residues phenylalanine 591–phenylalanine 611 form a helical membrane-spanning segment. Topologically, residues asparagine 612 to asparagine 630 are cytoplasmic. Residues leucine 631–tyrosine 651 form a helical membrane-spanning segment. The Extracellular segment spans residues histidine 652–leucine 666. A helical transmembrane segment spans residues tryptophan 667–valine 687. Residues histidine 688–leucine 709 are Cytoplasmic-facing. The chain crosses the membrane as a helical span at residues tyrosine 710–valine 730. Topologically, residues aspartate 731 to threonine 767 are extracellular. The helical transmembrane segment at tryptophan 768–tyrosine 788 threads the bilayer. Residues glutamate 789–alanine 803 lie on the Cytoplasmic side of the membrane. The chain crosses the membrane as a helical span at residues valine 804–isoleucine 824. Residues leucine 825–alanine 832 lie on the Extracellular side of the membrane. A helical membrane pass occupies residues phenylalanine 833–valine 853. Over proline 854–lysine 960 the chain is Cytoplasmic. The span at glutamine 866–threonine 879 shows a compositional bias: polar residues. Disordered stretches follow at residues glutamine 866–glutamate 891 and valine 908–lysine 960. The stretch at glutamine 870–arginine 924 forms a coiled coil. At threonine 872 the chain carries Phosphothreonine. An interaction with ATF4 region spans residues serine 887–leucine 915. Threonine 929 is subject to Phosphothreonine.

It belongs to the G-protein coupled receptor 3 family. GABA-B receptor subfamily. In terms of assembly, heterodimer of GABBR1 and GABBR2. Homodimers may form, but are inactive. Interacts (via C-terminus) with ATF4 (via leucine zipper domain). Interacts with JAKMIP1. In terms of tissue distribution, ubiquitously expressed in tissues including the forebrain, cerebellum, eye, atrium, ventricle, lung, stomach, small intestine, colon, liver, spleen, kidney, urinary bladder and skeletal muscle. Expressed at low levels in testis, and more highly in brain regions. Expression is high the brain regions including cerebral cortical layers, with higher expression in VIb than in the II-V layers, pyramidal CA1-CA3 cell layers and granular cell layers of the hippocampus, granular cell layers of the dentate gyrus, including the caudate, putamen, nucleus accumbens and olfactory tubercle, the granular layer cell layers of the medial habenula, in the cerebellum, predominantly in Purkinje cells, and in the granule cell layer. Also expressed in areas of the brain including the medial geniculate nucleus, substantia nigra, pars compacta, the ventral tegmental area, and in several thalamic, amygdaloid and hypothalamic nuclei, such as the arcuate nucleus of the hypothalamus and mammilary bodies of the hypothalamus. Expressed in the amacrine cell of the retina. As to expression, expressed in the brain, spinal cord, stomach, testis, adrenal gland, pituitary, spleen and prostate. Expressed in the brain, spinal cord, stomach, testis, kidney and liver. In terms of tissue distribution, ubiquitously expressed. As to expression, expressed in the forebrain, cerebellum, eye, kidney and urinary bladder. Ubiquitously expressed with high expression in the pyramidal CA1-CA3 cell layers of the hippocampus, the granule cell layers of the dentate gyrus and olfactory tubercle, the whole cortex, and Purkinje cells of the cerebellum. Moderate expression in the granule cell layer of the cerebellum.

The protein localises to the cell membrane. It localises to the postsynaptic cell membrane. Its subcellular location is the cell projection. It is found in the dendrite. The protein resides in the perikaryon. In terms of biological role, component of a heterodimeric G-protein coupled receptor for GABA, formed by GABBR1 and GABBR2. Within the heterodimeric GABA receptor, only GABBR1 seems to bind agonists, while GABBR2 mediates coupling to G proteins. Ligand binding causes a conformation change that triggers signaling via guanine nucleotide-binding proteins (G proteins) and modulates the activity of down-stream effectors, such as adenylate cyclase. Signaling inhibits adenylate cyclase, stimulates phospholipase A2, activates potassium channels, inactivates voltage-dependent calcium-channels and modulates inositol phospholipid hydrolysis. Calcium is required for high affinity binding to GABA. Plays a critical role in the fine-tuning of inhibitory synaptic transmission. Pre-synaptic GABA receptor inhibits neurotransmitter release by down-regulating high-voltage activated calcium channels, whereas postsynaptic GABA receptor decreases neuronal excitability by activating a prominent inwardly rectifying potassium (Kir) conductance that underlies the late inhibitory postsynaptic potentials. Not only implicated in synaptic inhibition but also in hippocampal long-term potentiation, slow wave sleep, muscle relaxation and antinociception. This Rattus norvegicus (Rat) protein is Gamma-aminobutyric acid type B receptor subunit 1 (Gabbr1).